A 126-amino-acid polypeptide reads, in one-letter code: MDDICSMAENINRTLFNILGTEIDEINLNTNNLYNFIMESNLTKVEQHTLHKNISNNRLEIYHHIKKEKSPKGKSSISPQARAFLEQVFRRKQSLNSKEKEEVAKKCGITPLQVRVWFINKRMRSK.

A DNA-binding region (homeobox) is located at residues 70–126 (SPKGKSSISPQARAFLEQVFRRKQSLNSKEKEEVAKKCGITPLQVRVWFINKRMRSK).

Belongs to the MATA1 family. In terms of assembly, binds DNA with a high specificity as a heterodimer of A1 and ALPHA2.

The protein resides in the nucleus. Its function is as follows. Mating type proteins are sequence specific DNA-binding proteins that act as master switches in yeast differentiation by controlling gene expression in a cell type-specific fashion. Transcriptional corepressor that, in a/alpha diploid cells, binds cooperatively with the ALPHA2 protein to a 21-bp DNA sequence termed the haploid-specific gene (hsg) operator, to repress transcription of haploid-specific genes and of MATALPHA1. The protein is Mating-type protein A1 (MATA1) of Saccharomyces cerevisiae (Baker's yeast).